The primary structure comprises 398 residues: ATP-dependent RNA helicase eIF4A (398 aa).

The short motif at 25–53 (DSFDSMELKPELLRGIYAYGFERPSAIQQ) is the Q motif element. One can recognise a Helicase ATP-binding domain in the interval 56–226 (ILPIIKGNDV…TKFMRDPVRI (171 aa)). ATP is bound at residue 69–76 (AQSGTGKT). Residues 174-177 (DEAD) carry the DEAD box motif. The 162-residue stretch at 237–398 (GIKQFYIAVE…EMPMNVADLI (162 aa)) folds into the Helicase C-terminal domain.

It belongs to the DEAD box helicase family. eIF4A subfamily. As to quaternary structure, component of the eIF4F complex, which composition varies with external and internal environmental conditions. It is composed of at least eIF4A, eIF4E and eIF4G.

The protein localises to the cytoplasm. It catalyses the reaction ATP + H2O = ADP + phosphate + H(+). Functionally, ATP-dependent RNA helicase which is a subunit of the eIF4F complex involved in cap recognition and is required for mRNA binding to ribosome. In the current model of translation initiation, eIF4A unwinds RNA secondary structures in the 5'-UTR of mRNAs which is necessary to allow efficient binding of the small ribosomal subunit, and subsequent scanning for the initiator codon. The chain is ATP-dependent RNA helicase eIF4A (tif1) from Neosartorya fischeri (strain ATCC 1020 / DSM 3700 / CBS 544.65 / FGSC A1164 / JCM 1740 / NRRL 181 / WB 181) (Aspergillus fischerianus).